Here is an 810-residue protein sequence, read N- to C-terminus: LPS-assembly protein LptD (810 aa).

An N-terminal signal peptide occupies residues 1 to 29 (MTKWTLGYSYPIALTISLIPALTPAIVQA).

This sequence belongs to the LptD family. In terms of assembly, component of the lipopolysaccharide transport and assembly complex. Interacts with LptE and LptA.

The protein resides in the cell outer membrane. Functionally, together with LptE, is involved in the assembly of lipopolysaccharide (LPS) at the surface of the outer membrane. This Aeromonas salmonicida (strain A449) protein is LPS-assembly protein LptD.